We begin with the raw amino-acid sequence, 113 residues long: Hydrogenase maturation factor HypA (113 aa).

Histidine 2 is a binding site for Ni(2+). 4 residues coordinate Zn(2+): cysteine 73, cysteine 76, cysteine 89, and cysteine 92.

This sequence belongs to the HypA/HybF family.

Its function is as follows. Involved in the maturation of [NiFe] hydrogenases. Required for nickel insertion into the metal center of the hydrogenase. This chain is Hydrogenase maturation factor HypA, found in Cereibacter sphaeroides (Rhodobacter sphaeroides).